The primary structure comprises 3387 residues: Genome polyprotein (3387 aa).

Residues 1 to 100 (MNQRKKVVRP…LNILNGRKRS (100 aa)) lie on the Cytoplasmic side of the membrane. A hydrophobic; homodimerization of capsid protein C region spans residues 36–71 (LFSGKGPLRMVLAFITFLRVLSIPPTAGILKRWGQL). The propeptide at 100–113 (STMTLLCLIPTAMA) is ER anchor for the capsid protein C, removed in mature form by serine protease NS3. The helical transmembrane segment at 101 to 117 (TMTLLCLIPTAMAFHLS) threads the bilayer. Over 118 to 237 (TRDGEPLMIV…GAWKHAQRVE (120 aa)) the chain is Extracellular. A glycan (N-linked (GlcNAc...) asparagine; by host) is linked at Asn-182. Residues 238-258 (SWILRNPGFALLAGFMAYMIG) form a helical membrane-spanning segment. The Cytoplasmic portion of the chain corresponds to 259-265 (QTGIQRT). The chain crosses the membrane as a helical span at residues 266-279 (VFFVLMMLVAPSYG). The Extracellular portion of the chain corresponds to 280-723 (MRCVGVGNRD…AVHQVFGSVY (444 aa)). Cystine bridges form between Cys-282–Cys-309, Cys-339–Cys-400, Cys-353–Cys-384, Cys-371–Cys-395, Cys-464–Cys-564, and Cys-581–Cys-612. Asn-346 carries N-linked (GlcNAc...) asparagine; by host glycosylation. The segment at 377–390 (DRGWGNGCGLFGKG) is fusion peptide. A helical transmembrane segment spans residues 724 to 746 (TTMFGGVSWMVRILIGFLVLWIG). Topologically, residues 747–750 (TNSR) are cytoplasmic. A helical transmembrane segment spans residues 751 to 771 (NTSMAMTCIAVGGITLFLGFT). Residues 772–1194 (VHADTGCAVS…MLGDTMSGRM (423 aa)) lie on the Extracellular side of the membrane. 6 disulfides stabilise this stretch: Cys-778–Cys-789, Cys-829–Cys-917, Cys-953–Cys-997, Cys-1054–Cys-1103, Cys-1065–Cys-1087, and Cys-1086–Cys-1090. 2 N-linked (GlcNAc...) asparagine; by host glycosylation sites follow: Asn-904 and Asn-981. Residues 1195–1218 (GGQIHLAIMAVFKMSPGYVLGIFL) traverse the membrane as a helical segment. Residues 1219–1224 (RKLTSR) lie on the Lumenal side of the membrane. A helical transmembrane segment spans residues 1225 to 1243 (ETALMVIGMAMTTVLSIPH). Topologically, residues 1244-1267 (DLMEFIDGISLGLILLKMVTHFDN) are cytoplasmic. The helical transmembrane segment at 1268 to 1288 (TQVGTLALSLTFIRSTMPLVM) threads the bilayer. Residue Ala-1289 is a topological domain, lumenal. The helical transmembrane segment at 1290-1308 (WRTIMAVLFVVTLIPLCRT) threads the bilayer. At 1309–1316 (SCLQKQSH) the chain is on the lumenal side. Residues 1317-1337 (WVEITALILGAQALPVYLMTL) traverse the membrane as a helical segment. Topologically, residues 1338–1345 (MKGASKRS) are cytoplasmic. A helical transmembrane segment spans residues 1346–1366 (WPLNEGIMAVGLVSLLGSALL). Topologically, residues 1367–1369 (KND) are lumenal. The helical transmembrane segment at 1370–1390 (VPLAGPMVAGGLLLAAYVMSG) threads the bilayer. Residues 1391–1437 (SSADLSLEKAANVQWDEMADITGSSPIIEVKQDEDGSFSIRDIEETN) lie on the Cytoplasmic side of the membrane. The interacts with and activates NS3 protease stretch occupies residues 1397-1436 (LEKAANVQWDEMADITGSSPIIEVKQDEDGSFSIRDIEET). Residues 1438-1458 (MITLLVKLALITVSGLYPLAI) constitute an intramembrane region (helical). Residues 1459-2146 (PVTMTLWYMW…LNELPESLET (688 aa)) lie on the Cytoplasmic side of the membrane. The region spanning 1475 to 1652 (SGALWDVPSP…ERTGEPDYEV (178 aa)) is the Peptidase S7 domain. Catalysis depends on charge relay system; for serine protease NS3 activity residues His-1525, Asp-1549, and Ser-1609. The Helicase ATP-binding domain occupies 1654–1810 (EDIFRKKRLT…QSNSPIEDIE (157 aa)). The tract at residues 1658-1661 (RKKR) is important for RNA-binding. Residue 1667 to 1674 (LHPGAGKT) coordinates ATP. Residues 1758-1761 (DEAH) carry the DEAH box motif. The Helicase C-terminal domain occupies 1820–1987 (TGFDWITDYQ…IIPTLFGPER (168 aa)). The residue at position 1862 (Lys-1862) is an N6-acetyllysine; by host. The chain crosses the membrane as a helical span at residues 2147-2167 (LMLVALLGAMTAGIFLFFMQG). The Lumenal portion of the chain corresponds to 2168–2169 (KG). Residues 2170 to 2190 (IGKLSMGLIAIAVASGLLWVA) constitute an intramembrane region (helical). Residue Glu-2191 is a topological domain, lumenal. A helical transmembrane segment spans residues 2192–2212 (IQPQWIAASIILEFFLMVLLI). Over 2213–2225 (PEPEKQRTPQDNQ) the chain is Cytoplasmic. A helical transmembrane segment spans residues 2226-2246 (LIYVILTILTIIGLIAANEMG). Topologically, residues 2247 to 2270 (LIEKTKTDFGFYQVKTETTILDVD) are lumenal. Residues 2271–2291 (LRPASAWTLYAVATTILTPML) constitute an intramembrane region (helical). Residues 2292-2301 (RHTIENTSAN) lie on the Lumenal side of the membrane. Residues Asn-2297 and Asn-2301 are each glycosylated (N-linked (GlcNAc...) asparagine; by host). Positions 2302-2322 (LSLAAIANQAAVLMGLGKGWP) form an intramembrane region, helical. Residues 2323–2343 (LHRMDLGVPLLAMGCYSQVNP) lie on the Lumenal side of the membrane. The helical transmembrane segment at 2344–2364 (TTLIASLVMLLVHYAIIGPGL) threads the bilayer. At 2365–2409 (QAKATREAQKRTAAGIMKNPTVDGITVIDLEPISYDPKFEKQLGQ) the chain is on the cytoplasmic side. The helical transmembrane segment at 2410-2430 (VMLLVLCAGQLLLMRTTWAFC) threads the bilayer. Topologically, residues 2431–2455 (EVLTLATGPVLTLWEGNPGRFWNTT) are lumenal. The N-linked (GlcNAc...) asparagine; by host glycan is linked to Asn-2453. Residues 2456-2476 (IAVSTANIFRGSYLAGAGLAF) traverse the membrane as a helical segment. Topologically, residues 2477 to 3387 (SLIKNAQTPR…SAPFESEGVL (911 aa)) are cytoplasmic. The region spanning 2489-2751 (TGTTGETLGE…DVDLGAGTRS (263 aa)) is the mRNA cap 0-1 NS5-type MT domain. Ser-2543 is an S-adenosyl-L-methionine binding site. Ser-2543 carries the phosphoserine modification. Lys-2548 acts as the For 2'-O-MTase activity in catalysis. The SUMO-interacting motif signature appears at 2564–2567 (VVDL). Residues Gly-2573, Trp-2574, Thr-2591, Lys-2592, Asp-2618, and Val-2619 each contribute to the S-adenosyl-L-methionine site. Asp-2633 acts as the For 2'-O-MTase activity in catalysis. Ile-2634 lines the S-adenosyl-L-methionine pocket. Residues Lys-2668 and Glu-2704 each act as for 2'-O-MTase activity in the active site. An S-adenosyl-L-methionine-binding site is contributed by Tyr-2706. 4 residues coordinate Zn(2+): Glu-2925, His-2929, Cys-2934, and Cys-2937. A RdRp catalytic domain is found at 3016–3166 (LIYADDTAGW…PLDERFSTSL (151 aa)). Zn(2+)-binding residues include His-3200, Cys-3216, and Cys-3335.

This sequence in the N-terminal section; belongs to the class I-like SAM-binding methyltransferase superfamily. mRNA cap 0-1 NS5-type methyltransferase family. Homodimer. Interacts (via N-terminus) with host EXOC1 (via C-terminus); this interaction results in EXOC1 degradation through the proteasome degradation pathway. As to quaternary structure, forms heterodimers with envelope protein E in the endoplasmic reticulum and Golgi. In terms of assembly, homodimer; in the endoplasmic reticulum and Golgi. Interacts with protein prM. Interacts with non-structural protein 1. Homodimer; Homohexamer when secreted. Interacts with envelope protein E. As to quaternary structure, interacts (via N-terminus) with serine protease NS3. In terms of assembly, forms a heterodimer with serine protease NS3. May form homooligomers. Forms a heterodimer with NS2B. Interacts with NS4B. Interacts with unphosphorylated RNA-directed RNA polymerase NS5; this interaction stimulates RNA-directed RNA polymerase NS5 guanylyltransferase activity. As to quaternary structure, interacts with host MAVS; this interaction inhibits the synthesis of IFN-beta. Interacts with host AUP1; the interaction occurs in the presence of Dengue virus NS4B and induces lipophagy which facilitates production of virus progeny particles. In terms of assembly, interacts with serine protease NS3. Homodimer. Interacts with host STAT2; this interaction inhibits the phosphorylation of the latter, and, when all viral proteins are present (polyprotein), targets STAT2 for degradation. Interacts with serine protease NS3. Interacts with host PAF1 complex; the interaction may prevent the recruitment of the PAF1 complex to interferon-responsive genes, and thus reduces the immune response. Post-translationally, specific enzymatic cleavages in vivo yield mature proteins. Cleavages in the lumen of endoplasmic reticulum are performed by host signal peptidase, whereas cleavages in the cytoplasmic side are performed by serine protease NS3. Signal cleavage at the 2K-4B site requires a prior NS3 protease-mediated cleavage at the 4A-2K site. In terms of processing, cleaved in post-Golgi vesicles by a host furin, releasing the mature small envelope protein M, and peptide pr. This cleavage is incomplete as up to 30% of viral particles still carry uncleaved prM. N-glycosylated. Post-translationally, N-glycosylated. The excreted form is glycosylated and this is required for efficient secretion of the protein from infected cells. In terms of processing, acetylated by host KAT5. Acetylation modulates NS3 RNA-binding and unwinding activities and plays an important positive role for viral replication. Sumoylation of RNA-directed RNA polymerase NS5 increases NS5 protein stability allowing proper viral RNA replication. Post-translationally, phosphorylated on serines residues. This phosphorylation may trigger NS5 nuclear localization.

Its subcellular location is the virion. The protein resides in the host nucleus. It localises to the host cytoplasm. It is found in the host perinuclear region. The protein localises to the secreted. Its subcellular location is the virion membrane. The protein resides in the host endoplasmic reticulum membrane. It localises to the host mitochondrion. The catalysed reaction is Selective hydrolysis of -Xaa-Xaa-|-Yaa- bonds in which each of the Xaa can be either Arg or Lys and Yaa can be either Ser or Ala.. It catalyses the reaction RNA(n) + a ribonucleoside 5'-triphosphate = RNA(n+1) + diphosphate. The enzyme catalyses a ribonucleoside 5'-triphosphate + H2O = a ribonucleoside 5'-diphosphate + phosphate + H(+). It carries out the reaction ATP + H2O = ADP + phosphate + H(+). The catalysed reaction is a 5'-end (5'-triphosphoguanosine)-ribonucleoside in mRNA + S-adenosyl-L-methionine = a 5'-end (N(7)-methyl 5'-triphosphoguanosine)-ribonucleoside in mRNA + S-adenosyl-L-homocysteine. It catalyses the reaction a 5'-end (N(7)-methyl 5'-triphosphoguanosine)-ribonucleoside in mRNA + S-adenosyl-L-methionine = a 5'-end (N(7)-methyl 5'-triphosphoguanosine)-(2'-O-methyl-ribonucleoside) in mRNA + S-adenosyl-L-homocysteine + H(+). Functionally, plays a role in virus budding by binding to the cell membrane and gathering the viral RNA into a nucleocapsid that forms the core of a mature virus particle. During virus entry, may induce genome penetration into the host cytoplasm after hemifusion induced by the surface proteins. Can migrate to the cell nucleus where it modulates host functions. Overcomes the anti-viral effects of host EXOC1 by sequestering and degrading the latter through the proteasome degradation pathway. Its function is as follows. Inhibits RNA silencing by interfering with host Dicer. Prevents premature fusion activity of envelope proteins in trans-Golgi by binding to envelope protein E at pH6.0. After virion release in extracellular space, gets dissociated from E dimers. In terms of biological role, acts as a chaperone for envelope protein E during intracellular virion assembly by masking and inactivating envelope protein E fusion peptide. prM is the only viral peptide matured by host furin in the trans-Golgi network probably to avoid catastrophic activation of the viral fusion activity in acidic Golgi compartment prior to virion release. prM-E cleavage is inefficient, and many virions are only partially matured. These uncleaved prM would play a role in immune evasion. Functionally, may play a role in virus budding. Exerts cytotoxic effects by activating a mitochondrial apoptotic pathway through M ectodomain. May display a viroporin activity. Its function is as follows. Binds to host cell surface receptor and mediates fusion between viral and cellular membranes. Envelope protein is synthesized in the endoplasmic reticulum in the form of heterodimer with protein prM. They play a role in virion budding in the ER, and the newly formed immature particle is covered with 60 spikes composed of heterodimer between precursor prM and envelope protein E. The virion is transported to the Golgi apparatus where the low pH causes dissociation of PrM-E heterodimers and formation of E homodimers. prM-E cleavage is inefficient, and many virions are only partially matured. These uncleaved prM would play a role in immune evasion. Involved in immune evasion, pathogenesis and viral replication. Once cleaved off the polyprotein, is targeted to three destinations: the viral replication cycle, the plasma membrane and the extracellular compartment. Essential for viral replication. Required for formation of the replication complex and recruitment of other non-structural proteins to the ER-derived membrane structures. Excreted as a hexameric lipoparticle that plays a role against host immune response. Antagonizing the complement function. Binds to the host macrophages and dendritic cells. Inhibits signal transduction originating from Toll-like receptor 3 (TLR3). In terms of biological role, disrupts the host endothelial glycocalyx layer of host pulmonary microvascular endothelial cells, inducing degradation of sialic acid and shedding of heparan sulfate proteoglycans. NS1 induces expression of sialidases, heparanase, and activates cathepsin L, which activates heparanase via enzymatic cleavage. These effects are probably linked to the endothelial hyperpermeability observed in severe dengue disease. Functionally, component of the viral RNA replication complex that functions in virion assembly and antagonizes the host immune response. Its function is as follows. Required cofactor for the serine protease function of NS3. May have membrane-destabilizing activity and form viroporins. Displays three enzymatic activities: serine protease, NTPase and RNA helicase. NS3 serine protease, in association with NS2B, performs its autocleavage and cleaves the polyprotein at dibasic sites in the cytoplasm: C-prM, NS2A-NS2B, NS2B-NS3, NS3-NS4A, NS4A-2K and NS4B-NS5. NS3 RNA helicase binds RNA and unwinds dsRNA in the 3' to 5' direction. In terms of biological role, regulates the ATPase activity of the NS3 helicase activity. NS4A allows NS3 helicase to conserve energy during unwinding. Plays a role in the inhibition of the host innate immune response. Interacts with host MAVS and thereby prevents the interaction between RIGI and MAVS. In turn, IFN-beta production is impaired. Interacts with host AUP1 which mediates induction of lipophagy in host cells and facilitates production of virus progeny particles. Functionally, functions as a signal peptide for NS4B and is required for the interferon antagonism activity of the latter. Its function is as follows. Induces the formation of ER-derived membrane vesicles where the viral replication takes place. Inhibits interferon (IFN)-induced host STAT1 phosphorylation and nuclear translocation, thereby preventing the establishment of cellular antiviral state by blocking the IFN-alpha/beta pathway. Replicates the viral (+) and (-) RNA genome, and performs the capping of genomes in the cytoplasm. NS5 methylates viral RNA cap at guanine N-7 and ribose 2'-O positions. Besides its role in RNA genome replication, also prevents the establishment of cellular antiviral state by blocking the interferon-alpha/beta (IFN-alpha/beta) signaling pathway. Inhibits host TYK2 and STAT2 phosphorylation, thereby preventing activation of JAK-STAT signaling pathway. May reduce immune responses by preventing the recruitment of the host PAF1 complex to interferon-responsive genes. The chain is Genome polyprotein from Aedes aegypti (Yellowfever mosquito).